The sequence spans 244 residues: Cell division protein ZapD (244 aa).

It belongs to the ZapD family. Interacts with FtsZ.

The protein localises to the cytoplasm. Functionally, cell division factor that enhances FtsZ-ring assembly. Directly interacts with FtsZ and promotes bundling of FtsZ protofilaments, with a reduction in FtsZ GTPase activity. This chain is Cell division protein ZapD, found in Shewanella sp. (strain MR-7).